The chain runs to 376 residues: F-box/kelch-repeat protein At1g67480 (376 aa).

The F-box domain maps to 37 to 85 (DPLIPGLPDDVAKQCLALVPRARFPSMGSVCKKWRFVVQSKEFITVRRL). Kelch repeat units lie at residues 139–189 (KLLV…EVNG), 190–237 (HVYV…AFNG), 239–289 (LYVM…LFCI), and 291–335 (WKNH…LLFS).

In Arabidopsis thaliana (Mouse-ear cress), this protein is F-box/kelch-repeat protein At1g67480.